Consider the following 318-residue polypeptide: Cytosolic Fe-S cluster assembly factor Nubp1 homolog (318 aa).

Positions methionine 1 to glutamate 15 are enriched in basic and acidic residues. A disordered region spans residues methionine 1–serine 29. 4 residues coordinate [4Fe-4S] cluster: cysteine 17, cysteine 31, cysteine 34, and cysteine 40. Residue glycine 70–serine 77 participates in ATP binding. Positions 245 and 248 each coordinate [4Fe-4S] cluster.

It belongs to the Mrp/NBP35 ATP-binding proteins family. NUBP1/NBP35 subfamily. As to quaternary structure, heterotetramer of 2 Nubp1 and 2 Nubp2 chains. [4Fe-4S] cluster serves as cofactor.

It is found in the cytoplasm. Functionally, component of the cytosolic iron-sulfur (Fe/S) protein assembly (CIA) machinery. Required for maturation of extramitochondrial Fe-S proteins. The Nubp1-Nubp2 heterotetramer forms a Fe-S scaffold complex, mediating the de novo assembly of an Fe-S cluster and its transfer to target apoproteins. This is Cytosolic Fe-S cluster assembly factor Nubp1 homolog from Aedes aegypti (Yellowfever mosquito).